The chain runs to 152 residues: Aspartate carbamoyltransferase regulatory chain (152 aa).

Positions 108, 113, 137, and 140 each coordinate Zn(2+).

Belongs to the PyrI family. Contains catalytic and regulatory chains. The cofactor is Zn(2+).

Involved in allosteric regulation of aspartate carbamoyltransferase. In Neisseria meningitidis serogroup A / serotype 4A (strain DSM 15465 / Z2491), this protein is Aspartate carbamoyltransferase regulatory chain.